The sequence spans 441 residues: Putative serine/threonine-protein kinase F31E3.2 (441 aa).

Basic residues predominate over residues 1 to 16; that stretch reads MGNVATRKRPGCHHHI. A disordered region spans residues 1–41; the sequence is MGNVATRKRPGCHHHIGRNEENLDDDEDGPAKKRLRIGEPQ. A Protein kinase domain is found at 126–381; the sequence is FVLERQLGRG…FTVLHAHPFF (256 aa). ATP contacts are provided by residues 132 to 140 and K156; that span reads LGRGSFGVV. D253 acts as the Proton acceptor in catalysis.

It belongs to the protein kinase superfamily. Ser/Thr protein kinase family.

The catalysed reaction is L-seryl-[protein] + ATP = O-phospho-L-seryl-[protein] + ADP + H(+). It carries out the reaction L-threonyl-[protein] + ATP = O-phospho-L-threonyl-[protein] + ADP + H(+). This chain is Putative serine/threonine-protein kinase F31E3.2, found in Caenorhabditis elegans.